A 553-amino-acid chain; its full sequence is Urocanate hydratase (553 aa).

NAD(+)-binding positions include 45–46, Gln123, 169–171, Asp189, Arg194, 235–236, 256–260, 266–267, Tyr315, and Gly485; these read GG, GMG, NA, QTSAH, and YV.

It belongs to the urocanase family. NAD(+) serves as cofactor.

Its subcellular location is the cytoplasm. It carries out the reaction 4-imidazolone-5-propanoate = trans-urocanate + H2O. The protein operates within amino-acid degradation; L-histidine degradation into L-glutamate; N-formimidoyl-L-glutamate from L-histidine: step 2/3. In terms of biological role, catalyzes the conversion of urocanate to 4-imidazolone-5-propionate. This chain is Urocanate hydratase, found in Staphylococcus aureus (strain MRSA252).